The following is a 277-amino-acid chain: Shikimate dehydrogenase (NADP(+)) (277 aa).

Shikimate is bound by residues 15-17 (SLS) and Thr-62. The active-site Proton acceptor is the Lys-66. Shikimate is bound by residues Asn-87 and Asp-102. Residues 127-131 (GAGGA), 151-156 (NRTVSK), and Ile-219 contribute to the NADP(+) site. Residue Tyr-221 participates in shikimate binding. Gly-242 lines the NADP(+) pocket.

This sequence belongs to the shikimate dehydrogenase family. Homodimer.

The catalysed reaction is shikimate + NADP(+) = 3-dehydroshikimate + NADPH + H(+). The protein operates within metabolic intermediate biosynthesis; chorismate biosynthesis; chorismate from D-erythrose 4-phosphate and phosphoenolpyruvate: step 4/7. Functionally, involved in the biosynthesis of the chorismate, which leads to the biosynthesis of aromatic amino acids. Catalyzes the reversible NADPH linked reduction of 3-dehydroshikimate (DHSA) to yield shikimate (SA). The polypeptide is Shikimate dehydrogenase (NADP(+)) (Geobacillus sp. (strain WCH70)).